The sequence spans 314 residues: tRNA dimethylallyltransferase (314 aa).

13 to 20 (GPTAVGKT) is a binding site for ATP. Residue 15-20 (TAVGKT) coordinates substrate. Residues 38 to 41 (DSMQ) are interaction with substrate tRNA.

Belongs to the IPP transferase family. Monomer. Mg(2+) serves as cofactor.

It carries out the reaction adenosine(37) in tRNA + dimethylallyl diphosphate = N(6)-dimethylallyladenosine(37) in tRNA + diphosphate. In terms of biological role, catalyzes the transfer of a dimethylallyl group onto the adenine at position 37 in tRNAs that read codons beginning with uridine, leading to the formation of N6-(dimethylallyl)adenosine (i(6)A). The chain is tRNA dimethylallyltransferase from Bacillus subtilis (strain 168).